A 391-amino-acid polypeptide reads, in one-letter code: N-acetylaspartylglutamate synthase A (391 aa).

The 186-residue stretch at 115-300 (FQELAGHGVP…VGGIIADYTM (186 aa)) folds into the ATP-grasp domain. ATP-binding positions include K154, 189–199 (QKYVKESHGKD), and R215. 3 residues coordinate Mg(2+): D260, E273, and N275. Mn(2+) is bound by residues D260, E273, and N275. At S319 the chain carries Phosphoserine. Positions 341 to 350 (TINSGSTSSE) are enriched in polar residues. Positions 341 to 379 (TINSGSTSSESEPELGEIRDSSASTMGAPPSMLPEPGYN) are disordered.

The protein belongs to the RimK family. It depends on Mg(2+) as a cofactor. Mn(2+) is required as a cofactor.

The protein localises to the cytoplasm. It catalyses the reaction N-acetyl-L-aspartate + L-glutamate + ATP = N-acetyl-L-aspartyl-L-glutamate + ADP + phosphate + H(+). It carries out the reaction N-acetyl-L-aspartate + 2 L-glutamate + 2 ATP = N-acetyl-L-aspartyl-L-glutamyl-L-glutamate + 2 ADP + 2 phosphate + 2 H(+). In terms of biological role, catalyzes the synthesis of N-acetyl-L-aspartyl-L-glutamate (NAAG) and N-acetyl-L-aspartyl-L-glutamyl-L-glutamate. This chain is N-acetylaspartylglutamate synthase A (RIMKLA), found in Homo sapiens (Human).